A 223-amino-acid chain; its full sequence is Transmembrane protein 126 (223 aa).

Residues 1–39 (MALSRAKPDELPRDAVVITEDQALKYQWKIITSWDKIGE) are Mitochondrial matrix-facing. Residues 40-62 (VWSLRYTPGILSALAAGTGAYIN) traverse the membrane as a helical segment. At 63 to 78 (NHYRTKLRLGGHGRLS) the chain is on the mitochondrial intermembrane side. Residues 79–99 (TYLPIVAVPAIFTMLAHKFFI) traverse the membrane as a helical segment. Topologically, residues 100–123 (QRPILLNPLGECPVCIQMRSAAFQ) are mitochondrial matrix. The helical transmembrane segment at 124–144 (TSLGIVYPTILAPFAAFLFAT) threads the bilayer. Residues 145-171 (RCYTYRIPSITENPREVFLLWRKFTRP) are Mitochondrial intermembrane-facing. Residues 172-192 (IVPALGTLIGLQALLTMFLTG) traverse the membrane as a helical segment. The Mitochondrial matrix segment spans residues 193 to 223 (QEDKQNFKLMLRMREIEHQVEEEHLPQRMDF).

It belongs to the TMEM126 family. As to quaternary structure, associates with mitochondrial complex I assembly intermediates during its biogenesis.

The protein resides in the mitochondrion membrane. Functionally, as part of the MCIA complex, involved in the assembly of the mitochondrial complex I. The polypeptide is Transmembrane protein 126 (Drosophila melanogaster (Fruit fly)).